The following is a 129-amino-acid chain: Fluoride-specific ion channel FluC 2 (129 aa).

4 helical membrane passes run 4 to 24, 39 to 59, 65 to 85, and 100 to 120; these read LDVMWVGLGGGVGSLGRWWIG, TFLINISGAFVIGYLSVLFGV, YGTMLNAGVLTGILGGYTTFS, and GGLAVFYLVASVLSGLFAAWL. Na(+) contacts are provided by glycine 79 and threonine 82.

The protein belongs to the fluoride channel Fluc/FEX (TC 1.A.43) family.

Its subcellular location is the cell inner membrane. The enzyme catalyses fluoride(in) = fluoride(out). With respect to regulation, na(+) is not transported, but it plays an essential structural role and its presence is essential for fluoride channel function. In terms of biological role, fluoride-specific ion channel. Important for reducing fluoride concentration in the cell, thus reducing its toxicity. The polypeptide is Fluoride-specific ion channel FluC 2 (Brucella suis biovar 1 (strain 1330)).